The sequence spans 427 residues: Trigger factor (427 aa).

The region spanning 163 to 248 (GDTVVIDFVG…VHEVKAKEVP (86 aa)) is the PPIase FKBP-type domain.

The protein belongs to the FKBP-type PPIase family. Tig subfamily.

The protein resides in the cytoplasm. It catalyses the reaction [protein]-peptidylproline (omega=180) = [protein]-peptidylproline (omega=0). Its function is as follows. Involved in protein export. Acts as a chaperone by maintaining the newly synthesized protein in an open conformation. Functions as a peptidyl-prolyl cis-trans isomerase. The protein is Trigger factor of Streptococcus equi subsp. zooepidemicus (strain H70).